The primary structure comprises 150 residues: Ankyrin repeat protein C18/B24 (150 aa).

The ANK repeat unit spans residues 41-73; that stretch reads ENKTLLYYAVDVNNIQFAKRLLEYGASVTTSRS.

This Vaccinia virus (strain Copenhagen) (VACV) protein is Ankyrin repeat protein C18/B24.